The sequence spans 1938 residues: Autophagy-related protein 2 homolog A (1938 aa).

The region spanning E14–P111 is the Chorein N-terminal domain. S765, S878, S892, S894, S1266, S1301, and S1309 each carry phosphoserine. A disordered region spans residues D1242–P1272. The tract at residues L1315 to S1359 is disordered. The span at E1343–S1359 shows a compositional bias: acidic residues. A WIPI-interacting region spans residues D1358–D1404. The residue at position 1402 (S1402) is a Phosphoserine. 2 disordered regions span residues P1438–R1476 and G1614–P1657. Residues T1446 to P1464 show a composition bias toward low complexity.

The protein belongs to the ATG2 family. Interacts with ATG9A (via C-terminus). Interacts (via WIPI-interacting region) with WDR45B/WIPI3. Interacts (via WIPI-interacting region) with WDR45/WIPI4. Interacts with TMEM41B. Interacts with VMP1.

The protein resides in the preautophagosomal structure membrane. The protein localises to the lipid droplet. Its subcellular location is the endoplasmic reticulum membrane. The enzyme catalyses a 1,2-diacyl-sn-glycero-3-phospho-L-serine(in) = a 1,2-diacyl-sn-glycero-3-phospho-L-serine(out). It carries out the reaction a 1,2-diacyl-sn-glycero-3-phosphoethanolamine(in) = a 1,2-diacyl-sn-glycero-3-phosphoethanolamine(out). In terms of biological role, lipid transfer protein involved in autophagosome assembly. Tethers the edge of the isolation membrane (IM) to the endoplasmic reticulum (ER) and mediates direct lipid transfer from ER to IM for IM expansion. Binds to the ER exit site (ERES), which is the membrane source for autophagosome formation, and extracts phospholipids from the membrane source and transfers them to ATG9 (ATG9A or ATG9B) to the IM for membrane expansion. Lipid transfer activity is enhanced by WIPI1 and WDR45/WIPI4, which promote ATG2A-association with phosphatidylinositol 3-monophosphate (PI3P)-containing membranes. Also regulates lipid droplets morphology and distribution within the cell. The polypeptide is Autophagy-related protein 2 homolog A (Homo sapiens (Human)).